We begin with the raw amino-acid sequence, 141 residues long: Galactose-6-phosphate isomerase subunit LacA (141 aa).

This sequence belongs to the LacAB/RpiB family. In terms of assembly, heteromultimeric protein consisting of LacA and LacB.

It catalyses the reaction aldehydo-D-galactose 6-phosphate = keto-D-tagatose 6-phosphate. It functions in the pathway carbohydrate metabolism; D-galactose 6-phosphate degradation; D-tagatose 6-phosphate from D-galactose 6-phosphate: step 1/1. The protein is Galactose-6-phosphate isomerase subunit LacA of Streptococcus pneumoniae (strain Taiwan19F-14).